The primary structure comprises 224 residues: Urease accessory protein UreF 2 (224 aa).

Belongs to the UreF family. In terms of assembly, ureD, UreF and UreG form a complex that acts as a GTP-hydrolysis-dependent molecular chaperone, activating the urease apoprotein by helping to assemble the nickel containing metallocenter of UreC. The UreE protein probably delivers the nickel.

The protein localises to the cytoplasm. Its function is as follows. Required for maturation of urease via the functional incorporation of the urease nickel metallocenter. This is Urease accessory protein UreF 2 from Pseudomonas syringae pv. tomato (strain ATCC BAA-871 / DC3000).